The sequence spans 176 residues: Sigma intracellular receptor 2 (176 aa).

The Cytoplasmic portion of the chain corresponds to 1–9 (MGVPATRRC). A helical transmembrane segment spans residues 10 to 30 (VEWLLGIYFLSHIPITLFMDL). Residues 10 to 158 (VEWLLGIYFL…PYLLIPFILL (149 aa)) enclose the EXPERA domain. The Lumenal portion of the chain corresponds to 31–68 (QAVLPRELYPVEFRNLLKWYAKEFKDPLLQEPPAWFKS). Residues 69–89 (FLFCELVFQLPFFPIATYAFL) form a helical membrane-spanning segment. Positions 75 and 77 each coordinate cholesterol. The Cytoplasmic portion of the chain corresponds to 90–99 (KGSCKWIRTP). A helical transmembrane segment spans residues 100 to 120 (AIIYSVHTMTTLIPILSTFLF). Over 121–140 (EDFSKASGFKGQRPETLHER) the chain is Lumenal. The helical transmembrane segment at 141-161 (LTLISVYAPYLLIPFILLIFM) threads the bilayer. The Cytoplasmic portion of the chain corresponds to 162–176 (LRSPYYKYEEKRKKK). Residues 172-176 (KRKKK) carry the ER retention motif motif.

It belongs to the TMEM97/sigma-2 receptor family. As to quaternary structure, homodimer. Interacts with NPC1; the interaction impairs NPC1-mediated cholesterol transport. Interacts with PGRMC1 and LDLR; the interaction increases LDL internalization. Interacts with histatin 1/HTN1; the interaction induces HTN1-stimulating wound healing. Interacts with TSPO.

The protein localises to the rough endoplasmic reticulum membrane. Its subcellular location is the nucleus membrane. In terms of biological role, sigma-2 receptor which contributes to ameliorate dysfunctional cellular processes and slow degenerative progression by regulating cell functions including cholesterol biosynthesis/trafficking, membrane trafficking, autophagy, lipid membrane-bound protein trafficking, and receptor stabilization at the cell surface. Forms a ternary complex with PGRMC1 receptor and low density lipoprotein receptor/LDLR at the plasma membrane, which increases LDLR-mediated LDL cholesterol internalization. Decreases lysosomal sterol transporter NPC1 availability to the cell, probably through NPC1-binding, hence controlling lipid transport, including cholesterol and LBPA, outside of late endosome/lysosome. Binds regio- and stereoselective ligand 20(S)-hydroxycholesterol (20(S)-OHC) which enhances TMEM97-NPC1 interaction and decreases TMEM97-PGRMC1 and TMEM97-TSPO interactions, thereby linking OHC binding to cholesterol homeostasis. Also able to bind cholesterol. Binds histatin 1 (Hst 1)/HN1 salivary peptide at the ER membrane, which is critical for increasing mitochondria-ER contacts and stimulating Hst1 wound healing properties. May alter the activity of some cytochrome P450 proteins. Although shows homologies with sterol isomerases (EXPERA domain), not able to catalyze sterol isomerization. However, may act as sensors of these molecules. Acts as a quality control factor in the ER, promoting the proteolytic degradation of nonproductive and extramitochondrial precursor proteins in the ER membrane thus removing them from the ER surface. The protein is Sigma intracellular receptor 2 (Tmem97) of Macaca fascicularis (Crab-eating macaque).